The sequence spans 339 residues: DNA-directed RNA polymerase subunit alpha (339 aa).

An alpha N-terminal domain (alpha-NTD) region spans residues 1–233; sequence MVREEVAGST…DLFLPFLHAE (233 aa). The alpha C-terminal domain (alpha-CTD) stretch occupies residues 264–339; sequence KKGIPLNCIF…IDLLKNKLSF (76 aa).

Belongs to the RNA polymerase alpha chain family. In terms of assembly, in plastids the minimal PEP RNA polymerase catalytic core is composed of four subunits: alpha, beta, beta', and beta''. When a (nuclear-encoded) sigma factor is associated with the core the holoenzyme is formed, which can initiate transcription.

It is found in the plastid. The protein resides in the chloroplast. It carries out the reaction RNA(n) + a ribonucleoside 5'-triphosphate = RNA(n+1) + diphosphate. Functionally, DNA-dependent RNA polymerase catalyzes the transcription of DNA into RNA using the four ribonucleoside triphosphates as substrates. This chain is DNA-directed RNA polymerase subunit alpha, found in Festucopsis festucoides.